Reading from the N-terminus, the 466-residue chain is Methylenomycin A resistance protein (466 aa).

The next 14 helical transmembrane spans lie at 16–36, 56–76, 83–103, 113–133, 146–166, 168–188, 203–223, 234–254, 276–296, 305–325, 337–357, 367–387, 409–429, and 434–454; these read ISVLIVLALGFLMATLDVTVV, WVVDGYILTFASLLLAGGALA, TIYILGLAVFVMASCLCAASI, LIQGIGAALFMPSSLSLLAAS, LWAALVSAASALGPFIGGVLV, LAGWQSIFLINVPIGAAALIS, VNIIGHLLGMMALGFLSYALI, VILVAFTAAVLAFVLFLLREI, FIGFLLNFALFGGMFMLSLFL, FMAGVELLPMMAVFVIGNLLF, LMFVSMAVSCIIALLLFVLIS, VLMSVMNLCTGITVPAMTTVI, IGALVGVAITGVIIHLSATWY, and FAFLMMGAAYSLAALLVWLFL.

It belongs to the major facilitator superfamily. EmrB family.

The protein resides in the cell membrane. In terms of biological role, resistance to the epoxide antibiotic methylenomycin. This is Methylenomycin A resistance protein (mmr) from Bacillus subtilis (strain 168).